Reading from the N-terminus, the 308-residue chain is Protoheme IX farnesyltransferase (308 aa).

Helical transmembrane passes span 20–40, 50–70, 102–122, 124–144, 149–169, 170–190, 227–249, and 288–308; these read LLAY…VTAI, AIHP…ATGA, NALA…WCAT, LLAG…YTLW, TSQN…IGWS, AITG…FFWT, LIYT…WLYG, and YLAV…PTLH.

Belongs to the UbiA prenyltransferase family. Protoheme IX farnesyltransferase subfamily.

It is found in the cell membrane. The enzyme catalyses heme b + (2E,6E)-farnesyl diphosphate + H2O = Fe(II)-heme o + diphosphate. Its pathway is porphyrin-containing compound metabolism; heme O biosynthesis; heme O from protoheme: step 1/1. Functionally, converts heme B (protoheme IX) to heme O by substitution of the vinyl group on carbon 2 of heme B porphyrin ring with a hydroxyethyl farnesyl side group. This chain is Protoheme IX farnesyltransferase, found in Mycobacterium bovis (strain BCG / Pasteur 1173P2).